Consider the following 47-residue polypeptide: Photosystem II reaction center protein K (47 aa).

A propeptide spanning residues 1–10 is cleaved from the precursor; that stretch reads MNIGFDMILA. The helical transmembrane segment at 22-42 threads the bilayer; the sequence is LVDVLPVIPLLFLLLAFVWQA.

This sequence belongs to the PsbK family. As to quaternary structure, PSII is composed of 1 copy each of membrane proteins PsbA, PsbB, PsbC, PsbD, PsbE, PsbF, PsbH, PsbI, PsbJ, PsbK, PsbL, PsbM, PsbT, PsbX, PsbY, PsbZ, Psb30/Ycf12, at least 3 peripheral proteins of the oxygen-evolving complex and a large number of cofactors. It forms dimeric complexes.

It localises to the plastid. It is found in the chloroplast thylakoid membrane. Its function is as follows. One of the components of the core complex of photosystem II (PSII). PSII is a light-driven water:plastoquinone oxidoreductase that uses light energy to abstract electrons from H(2)O, generating O(2) and a proton gradient subsequently used for ATP formation. It consists of a core antenna complex that captures photons, and an electron transfer chain that converts photonic excitation into a charge separation. The chain is Photosystem II reaction center protein K from Mesostigma viride (Green alga).